Here is a 319-residue protein sequence, read N- to C-terminus: Glutathione synthetase (319 aa).

Positions 129-314 (KLAILNFSRF…VAAMFADAVA (186 aa)) constitute an ATP-grasp domain. 155–211 (LKEHGDIIIKPLDGMGGMGIFRLTEKDPNIGSILETLMQLDSRTIMAQRYIPEIVHG) contributes to the ATP binding site. Mg(2+)-binding residues include Glu285 and Asn287.

Belongs to the prokaryotic GSH synthase family. The cofactor is Mg(2+). It depends on Mn(2+) as a cofactor.

The catalysed reaction is gamma-L-glutamyl-L-cysteine + glycine + ATP = glutathione + ADP + phosphate + H(+). Its pathway is sulfur metabolism; glutathione biosynthesis; glutathione from L-cysteine and L-glutamate: step 2/2. This chain is Glutathione synthetase, found in Neisseria meningitidis serogroup B (strain ATCC BAA-335 / MC58).